The following is a 163-amino-acid chain: Small ribosomal subunit protein uS9 (163 aa).

Residues 1–11 show a composition bias toward polar residues; sequence MAENTNDSQVV. Residues 1 to 40 form a disordered region; it reads MAENTNDSQVVETEEELTNYTTETNAGAGTGTSAIEPGYG. Low complexity predominate over residues 18–27; that stretch reads TNYTTETNAG.

Belongs to the universal ribosomal protein uS9 family.

This is Small ribosomal subunit protein uS9 from Bifidobacterium longum (strain DJO10A).